A 258-amino-acid polypeptide reads, in one-letter code: Alcohol dehydrogenase 2 (258 aa).

9-33 contacts NAD(+); it reads IFVGGLGFIGYEACKQLMAKNMASF. Residue S137 participates in substrate binding. Residue Y150 is the Proton acceptor of the active site.

Belongs to the short-chain dehydrogenases/reductases (SDR) family. As to quaternary structure, homodimer.

The enzyme catalyses a primary alcohol + NAD(+) = an aldehyde + NADH + H(+). It carries out the reaction a secondary alcohol + NAD(+) = a ketone + NADH + H(+). The protein is Alcohol dehydrogenase 2 (ADH2) of Ceratitis cosyra (Mango fruit fly).